Consider the following 203-residue polypeptide: ATP-dependent Clp protease proteolytic subunit 2 (203 aa).

Catalysis depends on Ser-98, which acts as the Nucleophile. His-123 is an active-site residue.

Belongs to the peptidase S14 family. Fourteen ClpP subunits assemble into 2 heptameric rings which stack back to back to give a disk-like structure with a central cavity, resembling the structure of eukaryotic proteasomes.

It localises to the cytoplasm. It catalyses the reaction Hydrolysis of proteins to small peptides in the presence of ATP and magnesium. alpha-casein is the usual test substrate. In the absence of ATP, only oligopeptides shorter than five residues are hydrolyzed (such as succinyl-Leu-Tyr-|-NHMec, and Leu-Tyr-Leu-|-Tyr-Trp, in which cleavage of the -Tyr-|-Leu- and -Tyr-|-Trp bonds also occurs).. Its function is as follows. Cleaves peptides in various proteins in a process that requires ATP hydrolysis. Has a chymotrypsin-like activity. Plays a major role in the degradation of misfolded proteins. The sequence is that of ATP-dependent Clp protease proteolytic subunit 2 from Chlamydia trachomatis serovar A (strain ATCC VR-571B / DSM 19440 / HAR-13).